The chain runs to 332 residues: DNA-directed RNA polymerase subunit alpha (332 aa).

The interval M1–E244 is alpha N-terminal domain (alpha-NTD). The tract at residues I259–N332 is alpha C-terminal domain (alpha-CTD).

Belongs to the RNA polymerase alpha chain family. In terms of assembly, homodimer. The RNAP catalytic core consists of 2 alpha, 1 beta, 1 beta' and 1 omega subunit. When a sigma factor is associated with the core the holoenzyme is formed, which can initiate transcription.

It carries out the reaction RNA(n) + a ribonucleoside 5'-triphosphate = RNA(n+1) + diphosphate. Its function is as follows. DNA-dependent RNA polymerase catalyzes the transcription of DNA into RNA using the four ribonucleoside triphosphates as substrates. The sequence is that of DNA-directed RNA polymerase subunit alpha from Mesomycoplasma hyopneumoniae (strain 232) (Mycoplasma hyopneumoniae).